The primary structure comprises 341 residues: Dye-decolorizing peroxidase (341 aa).

The active-site Proton acceptor is Asp-148. His-221 is a heme binding site. Residues 304–341 (FLDDPPDAPTRLVPEATFTAPISDGSLGIGSLKRSAQQ) are targeting peptide.

It belongs to the DyP-type peroxidase family. As to quaternary structure, homohexamer. It depends on heme b as a cofactor.

Its subcellular location is the encapsulin nanocompartment. Its function is as follows. Cargo protein of a type 1 encapsulin nanocompartment. Has both general peroxidase activity and dye-decolorizing activity. Can catalyze the oxidation of both protoporphyrinogen IX and coproporphyrinogen III to their corresponding porphyrins. Also efficiently decolorizes the dyes alizarin red and Cibacron blue F3GA. This cargo-loaded encapsulin nanocompartment is probably involved in protection against oxidative damage. The polypeptide is Dye-decolorizing peroxidase (Rhodococcus erythropolis (strain PR4 / NBRC 100887)).